The chain runs to 896 residues: Lipoxygenase 2, chloroplastic (896 aa).

A chloroplast-targeting transit peptide spans 1 to 56 (MYCRESLSSLQTLNVAKSLSSLFPKQSALINPISAGRRNNLPRPNLRRRCKVTASR). Residues 79–199 (ITAQEEFLEG…VDPTKRIFFS (121 aa)) enclose the PLAT domain. The EIF4E2 binding stretch occupies residues 175–232 (GSITFTCESWVAPKSVDPTKRIFFSDKSYLPSQTPEPLKKYRKEELETLQGKNREEVG). One can recognise a Lipoxygenase domain in the interval 202–896 (SYLPSQTPEP…GMGVPYSISI (695 aa)). Histidine 554, histidine 559, histidine 746, asparagine 750, and isoleucine 896 together coordinate Fe cation.

The protein belongs to the lipoxygenase family. As to quaternary structure, interacts with EIF4E2. It depends on Fe cation as a cofactor. In terms of tissue distribution, in leaves and inflorescences but not abundant in seeds, roots and stems.

The protein localises to the plastid. Its subcellular location is the chloroplast. The protein resides in the cytoplasm. The catalysed reaction is (9Z,12Z)-octadecadienoate + O2 = (13S)-hydroperoxy-(9Z,11E)-octadecadienoate. It catalyses the reaction (9Z,12Z,15Z)-octadecatrienoate + O2 = (13S)-hydroperoxy-(9Z,11E,15Z)-octadecatrienoate. Its pathway is lipid metabolism; oxylipin biosynthesis. Its function is as follows. 13S-lipoxygenase that can use linolenic acid as substrates. Plant lipoxygenases may be involved in a number of diverse aspects of plant physiology including growth and development, pest resistance, and senescence or responses to wounding. Catalyzes the hydroperoxidation of lipids containing a cis,cis-1,4-pentadiene structure. Required for the wound-induced synthesis of jasmonic acid (JA) in leaves. The chain is Lipoxygenase 2, chloroplastic (LOX2) from Arabidopsis thaliana (Mouse-ear cress).